We begin with the raw amino-acid sequence, 463 residues long: Putative dipeptidase YtjP (463 aa).

His-85 contributes to the Zn(2+) binding site. Asp-87 is a catalytic residue. Asp-116 serves as a coordination point for Zn(2+). Glu-150 functions as the Proton acceptor in the catalytic mechanism. 3 residues coordinate Zn(2+): Glu-151, Asp-174, and His-436.

The protein belongs to the peptidase M20A family. Zn(2+) serves as cofactor.

This chain is Putative dipeptidase YtjP (ytjP), found in Bacillus subtilis (strain 168).